The following is a 111-amino-acid chain: Ig kappa chain V-III region PC 2485/PC 4039 (111 aa).

A framework-1 region spans residues 1–23; the sequence is DIVLTQSPASLAVSLGQRATISC. Cys-23 and Cys-92 are joined by a disulfide. The interval 24–38 is complementarity-determining-1; the sequence is RASKSVSTSGYSYMH. Residues 39–53 are framework-2; it reads WYQQKPGQPPKLLIY. A complementarity-determining-2 region spans residues 54–60; that stretch reads LASSLES. The framework-3 stretch occupies residues 61–92; sequence GVPARFSGSGSGTDFTLNIQPVEEEDAAIYYC. A complementarity-determining-3 region spans residues 93-101; sequence QHSRELPLT. The tract at residues 102-111 is framework-4; that stretch reads FGAGTKLELK.

The polypeptide is Ig kappa chain V-III region PC 2485/PC 4039 (Mus musculus (Mouse)).